A 424-amino-acid chain; its full sequence is Zinc finger protein 597 (424 aa).

A KRAB domain is found at 14-88 (ILFEDLAVYF…KYPIAAPLVP (75 aa)). 4 C2H2-type zinc fingers span residues 156–178 (YKCP…QKIH), 184–206 (HKCG…RRIH), 212–234 (YKCA…MNSH), and 240–262 (YTCS…QKSH). Lys300 is covalently cross-linked (Glycyl lysine isopeptide (Lys-Gly) (interchain with G-Cter in SUMO2)). 3 consecutive C2H2-type zinc fingers follow at residues 341–363 (LQCP…QNIH), 369–391 (HKCK…QKSH), and 397–419 (FKCT…KRTH).

Belongs to the krueppel C2H2-type zinc-finger protein family.

It is found in the nucleus. Functionally, may be involved in transcriptional regulation. In Homo sapiens (Human), this protein is Zinc finger protein 597 (ZNF597).